The chain runs to 147 residues: Endoribonuclease YbeY (147 aa).

Zn(2+) contacts are provided by His111, His115, and Asp121.

Belongs to the endoribonuclease YbeY family. It depends on Zn(2+) as a cofactor.

Its subcellular location is the cytoplasm. In terms of biological role, single strand-specific metallo-endoribonuclease involved in late-stage 70S ribosome quality control and in maturation of the 3' terminus of the 16S rRNA. The chain is Endoribonuclease YbeY from Amoebophilus asiaticus (strain 5a2).